Consider the following 267-residue polypeptide: MTRIALGIEYDGTDFRGWQMQQSGVRTVQECLEAALSKVANHSVTVVCAGRTDAGVHGTGQVVHFDSDAPREMKSWIMGGNTNLPRDVTIRWAVPVSDDFHARFSAVSRRYRYVIYNHARPPALYRSQVTWNHRPLDVAAMREAASYLVGHHDFTAYRSVHCQAKSPLKTLHSLELYEQGKVLVLEAHANAFLMHMVRNIAGVLMKVGAGKKPPVWAKDVLECRDRRLGAATAPPFGLYLVEIEYPELFALPDEPLGPLWLPDRLEA.

The Nucleophile role is filled by Asp-53. Tyr-111 lines the substrate pocket.

The protein belongs to the tRNA pseudouridine synthase TruA family. Homodimer.

It catalyses the reaction uridine(38/39/40) in tRNA = pseudouridine(38/39/40) in tRNA. Formation of pseudouridine at positions 38, 39 and 40 in the anticodon stem and loop of transfer RNAs. The polypeptide is tRNA pseudouridine synthase A (Alcanivorax borkumensis (strain ATCC 700651 / DSM 11573 / NCIMB 13689 / SK2)).